The sequence spans 510 residues: NAD(P)H-quinone oxidoreductase subunit 2 B, chloroplastic (510 aa).

13 consecutive transmembrane segments (helical) span residues 24-44 (LLLF…GLIL), 57-77 (IPWL…ALLF), 99-119 (IFQF…VEYI), 124-144 (MAIT…MFLC), 149-169 (LITI…LSGY), 183-203 (YLLM…WLYG), 227-247 (PGIS…LSPA), 295-315 (WHLL…LIAI), 323-343 (MLAY…IVGD), 354-374 (YMLF…SFGL), 392-412 (AFLA…PPLA), 418-438 (LHLF…IGLL), and 482-502 (LSMI…NPII).

The protein belongs to the complex I subunit 2 family. In terms of assembly, NDH is composed of at least 16 different subunits, 5 of which are encoded in the nucleus.

Its subcellular location is the plastid. The protein resides in the chloroplast thylakoid membrane. It catalyses the reaction a plastoquinone + NADH + (n+1) H(+)(in) = a plastoquinol + NAD(+) + n H(+)(out). The enzyme catalyses a plastoquinone + NADPH + (n+1) H(+)(in) = a plastoquinol + NADP(+) + n H(+)(out). In terms of biological role, NDH shuttles electrons from NAD(P)H:plastoquinone, via FMN and iron-sulfur (Fe-S) centers, to quinones in the photosynthetic chain and possibly in a chloroplast respiratory chain. The immediate electron acceptor for the enzyme in this species is believed to be plastoquinone. Couples the redox reaction to proton translocation, and thus conserves the redox energy in a proton gradient. This is NAD(P)H-quinone oxidoreductase subunit 2 B, chloroplastic from Morus indica (Mulberry).